The sequence spans 61 residues: MAKLSKMAQAKRKLKFPVRQYNRCPLCGRPRAFLRKFQMCRLCFRKRALQGEITGVIKSSW.

Residues cysteine 24, cysteine 27, cysteine 40, and cysteine 43 each coordinate Zn(2+).

Belongs to the universal ribosomal protein uS14 family. Zinc-binding uS14 subfamily. As to quaternary structure, part of the 30S ribosomal subunit. Contacts proteins S3 and S10. Requires Zn(2+) as cofactor.

Its function is as follows. Binds 16S rRNA, required for the assembly of 30S particles and may also be responsible for determining the conformation of the 16S rRNA at the A site. This is Small ribosomal subunit protein uS14 from Anaeromyxobacter sp. (strain Fw109-5).